A 107-amino-acid polypeptide reads, in one-letter code: MALWIRSLPLLALLVFSGPGTSYAAANQHLCGSHLVEALYLVCGERGFFYSPKARRDVEQPLVSSPLRGEAGVLPFQQEEYEKVKRGIVEQCCHNTCSLYQLENYCN.

The N-terminal stretch at 1 to 24 (MALWIRSLPLLALLVFSGPGTSYA) is a signal peptide. 3 disulfides stabilise this stretch: C31–C93, C43–C106, and C92–C97. A propeptide spans 57-84 (DVEQPLVSSPLRGEAGVLPFQQEEYEKV) (c peptide).

Belongs to the insulin family. Heterodimer of a B chain and an A chain linked by two disulfide bonds.

The protein localises to the secreted. In terms of biological role, insulin decreases blood glucose concentration. It increases cell permeability to monosaccharides, amino acids and fatty acids. It accelerates glycolysis, the pentose phosphate cycle, and glycogen synthesis in liver. This Gallus gallus (Chicken) protein is Insulin (INS).